The chain runs to 256 residues: Tryptophan synthase alpha chain (256 aa).

Active-site proton acceptor residues include Glu-46 and Asp-57.

It belongs to the TrpA family. Tetramer of two alpha and two beta chains.

The enzyme catalyses (1S,2R)-1-C-(indol-3-yl)glycerol 3-phosphate + L-serine = D-glyceraldehyde 3-phosphate + L-tryptophan + H2O. Its pathway is amino-acid biosynthesis; L-tryptophan biosynthesis; L-tryptophan from chorismate: step 5/5. Its function is as follows. The alpha subunit is responsible for the aldol cleavage of indoleglycerol phosphate to indole and glyceraldehyde 3-phosphate. The polypeptide is Tryptophan synthase alpha chain (Bacteroides thetaiotaomicron (strain ATCC 29148 / DSM 2079 / JCM 5827 / CCUG 10774 / NCTC 10582 / VPI-5482 / E50)).